A 715-amino-acid chain; its full sequence is ATP-dependent DNA helicase Hel308 (715 aa).

The Q motif signature appears at 8-36; sequence MPIEDLKLPSNVIEIIKKRGIKKLNPPQT. Residues Gln35 and 53–60 each bind ATP; that span reads SPTGSGKT. One can recognise a Helicase ATP-binding domain in the interval 40–203; it reads KKGLLEGNRL…WLGAEPVATN (164 aa). A DEAH box motif is present at residues 152–155; that stretch reads DELH. In terms of domain architecture, Helicase C-terminal spans 236–442; that stretch reads HGDDAIIAYT…ERAFYTFLLG (207 aa).

It belongs to the helicase family. Hel308 subfamily. As to quaternary structure, monomer.

The enzyme catalyses Couples ATP hydrolysis with the unwinding of duplex DNA by translocating in the 3'-5' direction.. It catalyses the reaction ATP + H2O = ADP + phosphate + H(+). Its function is as follows. DNA-dependent ATPase and 3'-5' DNA helicase that may be involved in repair of stalled replication forks. A low processivity 3'-5' helicase. Unwinds short dsDNA substrates with 3'-overhangs (25 bp dsDNA with 25 base overhang), less active on longer dsDNA substrates. Also unwinds the lagging strand of a stalled replication fork (but the leading strand was not tested). Binds ssDNA, but dsDNA about 35-fold less well. Able to displace streptavidin from biotinylated ssDNA, which is partially inhibited by DNA-binding proteins, suggesting it may play a role in stripping proteins from stalled replication forks. The polypeptide is ATP-dependent DNA helicase Hel308 (Saccharolobus solfataricus (strain 98/2) (Sulfolobus solfataricus)).